The sequence spans 132 residues: Small ribosomal subunit protein uS8 (132 aa).

This sequence belongs to the universal ribosomal protein uS8 family. Part of the 30S ribosomal subunit. Contacts proteins S5 and S12.

One of the primary rRNA binding proteins, it binds directly to 16S rRNA central domain where it helps coordinate assembly of the platform of the 30S subunit. The sequence is that of Small ribosomal subunit protein uS8 from Francisella tularensis subsp. novicida (strain U112).